Here is a 240-residue protein sequence, read N- to C-terminus: Protein CDV3 homolog A (240 aa).

Residues 1 to 15 (MAEPQEKSLDDFFAK) show a composition bias toward basic and acidic residues. A disordered region spans residues 1 to 204 (MAEPQEKSLD…TESRREKEME (204 aa)). Ala-2 is subject to N-acetylalanine. Positions 27 to 52 (SGSAAGSRGSARPPDGAPSSSSSMSG) are enriched in low complexity. The segment covering 57–73 (VKKEKSGKSDNPDQLQE) has biased composition (basic and acidic residues). Composition is skewed to polar residues over residues 127 to 141 (DKSS…QAQA) and 181 to 192 (SDTQFPSLQATA). The segment covering 193-204 (KHTESRREKEME) has biased composition (basic and acidic residues).

Belongs to the CDV3 family.

Its subcellular location is the cytoplasm. This chain is Protein CDV3 homolog A (cdv3-a), found in Xenopus laevis (African clawed frog).